The chain runs to 217 residues: Elongation factor Ts (217 aa).

Positions 81–84 (TDFV) are involved in Mg(2+) ion dislocation from EF-Tu.

Belongs to the EF-Ts family.

Its subcellular location is the cytoplasm. Functionally, associates with the EF-Tu.GDP complex and induces the exchange of GDP to GTP. It remains bound to the aminoacyl-tRNA.EF-Tu.GTP complex up to the GTP hydrolysis stage on the ribosome. The protein is Elongation factor Ts of Myxococcus xanthus (strain DK1622).